The primary structure comprises 215 residues: UPF0502 protein YceH (215 aa).

N6-acetyllysine is present on K80.

Belongs to the UPF0502 family.

The sequence is that of UPF0502 protein YceH from Shigella boydii serotype 18 (strain CDC 3083-94 / BS512).